A 103-amino-acid chain; its full sequence is Enhancer of rudimentary homolog (103 aa).

This sequence belongs to the E(R) family. As to quaternary structure, homodimer.

May have a role in the cell cycle. The polypeptide is Enhancer of rudimentary homolog (Caenorhabditis elegans).